Here is a 1725-residue protein sequence, read N- to C-terminus: MALNELGNCAPKYQTAYACEGKQLTIECEPGDLINLIRANYGRFSITICNDHGNVEWSVNCMFPKSLTVLNSKCSHKQSCSVLAATSMFGDPCPGTHKYLEAHYQCISAAQTSTTTNRPSPPPWVLSNGPPIFGNGSGLIQVPPPLPPRLPSLPGVVGIHGINAVQPTHSTPSSSTAALPGGRLKGVTSATTKHPGGRHDGLPPPPQLHHHHHHTDETVPTKPSSSSSSNSGSAGNVTSPSNTRILTGVGGAGSDDGTLLTTKSSPNRTPGTTASAANNSVNIGGAGTGSVVRTINNINLNAAGMGTDDESKLFCGAMHARNLFWNMTRVGDVNVQPCPGGAAGIAKWRCVLMKRLPDSGDDEYDDDLPAASSTTPQPSNNGGDCVHNSSSCEPPVSMAHKVNQRLRNFEPTWHPLTPDLTQCRSLWLNSLEMRVNQRDSSLTSIANDLSEVTSSKTLYGGDMLVTTKIIQTMSEKMLHDKETFPDQRQREAIIMELLHGVVKTGSNLLDESQLSSWLDLNPEDQMRVATSLLTGLEYNAFLLADTIIRERNVVQKVKNILLSVRVLETKTIHGSVVFPDSDQWPLSSDRIELPRTALLENSEGGLVRIVFAAFDRLESILKPSYDHFDLKSARSYVRNTAILSNDSDAATGDMQQRIRILNSKVISASLGKGRHIQLSQPITLVLKHLKTENVSNPTCVFWNYIDHAWSANGCSLESTNRTHSVCSCNHLTNFAILMDVVDEHQHSLFTMFDGNMRIFIYISVAICVVFIIIALLTLKLFNGVFVKSARTSIYSSIYICLLAIELLFLLGIEQTETSIFCGFITVFLHCAILSGTAWFCYEAFHSYSTLTSDELLLEVDQTPKVNCYYLLSYGLSLSVVAISLVIDPSTYTQNDYCVLMEANALFYSTFVAPVLIFFVAAITYTFLSWIIMRRKSRTALKTKEHTRLANVRFDIRCSFVFLLLLSVVWCCAYFYLRGAKLDEDGAPIYGYCFICFNTLLGIYIFVFHCIQNEKIRREYRKYVRQHAWLPKCLRCSKTSISSGVVAGNGGPGVGNTANQSAGTLSKSKSKLPLGAGDEARDGDAQQQQHDLPAAEDAIIMGAGSDCELNEAQQRRTLKSGLLTGSLQPAPVGAVVLERNTLRSTGMASVGHASPTSSAGSTHLIFAHKQQQQQQQQLQQPGETYYHQPDYYSWKHPPGGQREYYNNAGGAVGAAVGGVGGASPQQAHEVFYWTQKHNNQHGKKKRGGGAGAVPASPSGSLHSRATATSQVLFYPSYKKTTGMKQGPPPQQAYPHYAEALDPPNAAYYQQQLQQQQLRQQRQQQQQQLSSDEEQAEQHAHLLHLQHQQRRVGGQQLPAPPPHMAQYQQELLAQQQRQQYRNKHSNCDLSQGMGLGINMGMGHGDAYYNQGGSSNGGGDAGGPVYEEILSNRNSDVQHYEVGDFDVDEVYNNSVGTGVFNNMRAAVAAGGSRYGGGSLSGGSVTSRSQQQQQQQLKQKQPPRRCAADDDDDDDDDDDEYDDEVTAAEQLHDSVCDDEDNESDIDDDTHGLPPQSDERMRRLMALQDEDFKRRFQRQQRKNGMPLDYGASVQSAAAAHPDHNGAVFGVSGGVGEGSMRGAYRQQQTAKSPNARLAVNELFGHGNAGPPLPPANQTPAQKRQQLQKLSPQSTTSSSSHTSHSNPQHAPAHHLQHHHTQQQQQQQQQARHLSAMLDENNTVRCYLEPLAK.

Residues 1 to 757 are Extracellular-facing; sequence MALNELGNCA…LFTMFDGNMR (757 aa). One can recognise an SUEL-type lectin domain in the interval 18 to 107; it reads ACEGKQLTIE…KYLEAHYQCI (90 aa). Asn-135 carries N-linked (GlcNAc...) asparagine glycosylation. Residues 164–284 are disordered; that stretch reads AVQPTHSTPS…SAANNSVNIG (121 aa). Composition is skewed to low complexity over residues 167 to 176 and 224 to 236; these read PTHSTPSSST and SSSS…SAGN. Asn-236, Asn-278, Asn-326, Asn-388, Asn-645, Asn-693, and Asn-720 each carry an N-linked (GlcNAc...) asparagine glycan. Polar residues predominate over residues 259 to 282; it reads LLTTKSSPNRTPGTTASAANNSVN. Residues 361–390 are disordered; the sequence is DDEYDDDLPAASSTTPQPSNNGGDCVHNSS. Over residues 371-390 the composition is skewed to polar residues; it reads ASSTTPQPSNNGGDCVHNSS. One can recognise a GAIN-B domain in the interval 551–744; that stretch reads RNVVQKVKNI…AILMDVVDEH (194 aa). 2 disulfides stabilise this stretch: Cys-699/Cys-726 and Cys-714/Cys-728. The interval 699 to 744 is GPS; sequence CVFWNYIDHAWSANGCSLESTNRTHSVCSCNHLTNFAILMDVVDEH. The chain crosses the membrane as a helical span at residues 758–778; sequence IFIYISVAICVVFIIIALLTL. The Cytoplasmic segment spans residues 779 to 791; the sequence is KLFNGVFVKSART. Residues 792–812 traverse the membrane as a helical segment; sequence SIYSSIYICLLAIELLFLLGI. The Extracellular segment spans residues 813–818; sequence EQTETS. Residues 819-839 form a helical membrane-spanning segment; sequence IFCGFITVFLHCAILSGTAWF. Topologically, residues 840 to 865 are cytoplasmic; the sequence is CYEAFHSYSTLTSDELLLEVDQTPKV. The helical transmembrane segment at 866-886 threads the bilayer; that stretch reads NCYYLLSYGLSLSVVAISLVI. Over 887 to 910 the chain is Extracellular; it reads DPSTYTQNDYCVLMEANALFYSTF. Residues 911-931 traverse the membrane as a helical segment; it reads VAPVLIFFVAAITYTFLSWII. The Cytoplasmic segment spans residues 932–958; it reads MRRKSRTALKTKEHTRLANVRFDIRCS. The helical transmembrane segment at 959-979 threads the bilayer; the sequence is FVFLLLLSVVWCCAYFYLRGA. Topologically, residues 980 to 986 are extracellular; sequence KLDEDGA. Residues 987–1007 traverse the membrane as a helical segment; that stretch reads PIYGYCFICFNTLLGIYIFVF. At 1008-1725 the chain is on the cytoplasmic side; it reads HCIQNEKIRR…VRCYLEPLAK (718 aa). Positions 1056-1088 are disordered; that stretch reads TANQSAGTLSKSKSKLPLGAGDEARDGDAQQQQ. Ser-1153 is modified (phosphoserine). Disordered stretches follow at residues 1236 to 1263, 1309 to 1337, 1472 to 1555, and 1636 to 1705; these read HNNQ…LHSR, QQLQ…AEQH, GGGS…SDER, and LFGH…QARH. Basic residues predominate over residues 1237–1246; it reads NNQHGKKKRG. A phosphoserine mark is found at Ser-1255 and Ser-1262. Residues 1309–1327 are compositionally biased toward low complexity; sequence QQLQQQQLRQQRQQQQQQL. 2 positions are modified to phosphoserine: Ser-1328 and Ser-1329. The segment covering 1478–1496 has biased composition (low complexity); the sequence is GGSVTSRSQQQQQQQLKQK. 2 stretches are compositionally biased toward acidic residues: residues 1505-1522 and 1532-1543; these read DDDD…DEVT and CDDEDNESDIDD. Residues 1651 to 1666 show a composition bias toward polar residues; it reads QTPAQKRQQLQKLSPQ. Low complexity predominate over residues 1667–1683; that stretch reads STTSSSSHTSHSNPQHA. A compositionally biased stretch (basic residues) spans 1684–1693; that stretch reads PAHHLQHHHT. Positions 1694 to 1705 are enriched in low complexity; that stretch reads QQQQQQQQQARH.

The protein belongs to the G-protein coupled receptor 2 family. LN-TM7 subfamily. Forms a heterodimer, consisting of a large extracellular region non-covalently linked to a seven-transmembrane moiety. Proteolytically cleaved into 2 subunits, an extracellular subunit and a seven-transmembrane subunit.

It is found in the cell membrane. This Drosophila mojavensis (Fruit fly) protein is Latrophilin Cirl.